A 436-amino-acid chain; its full sequence is Cysteine--tRNA ligase (436 aa).

Zn(2+) is bound at residue cysteine 24. The 'HIGH' region motif lies at 26–36 (PTVYNHIHIGN). Zn(2+) contacts are provided by cysteine 202, histidine 227, and glutamate 231. Positions 259–263 (KMSKS) match the 'KMSKS' region motif. Position 262 (lysine 262) interacts with ATP.

Belongs to the class-I aminoacyl-tRNA synthetase family. Monomer. The cofactor is Zn(2+).

It localises to the cytoplasm. The catalysed reaction is tRNA(Cys) + L-cysteine + ATP = L-cysteinyl-tRNA(Cys) + AMP + diphosphate. This Ureaplasma parvum serovar 3 (strain ATCC 700970) protein is Cysteine--tRNA ligase.